A 331-amino-acid chain; its full sequence is 6-phosphogluconolactonase (331 aa).

This sequence belongs to the cycloisomerase 2 family.

The catalysed reaction is 6-phospho-D-glucono-1,5-lactone + H2O = 6-phospho-D-gluconate + H(+). It functions in the pathway carbohydrate degradation; pentose phosphate pathway; D-ribulose 5-phosphate from D-glucose 6-phosphate (oxidative stage): step 2/3. Functionally, catalyzes the hydrolysis of 6-phosphogluconolactone to 6-phosphogluconate. This chain is 6-phosphogluconolactonase, found in Salmonella paratyphi A (strain ATCC 9150 / SARB42).